The following is a 171-amino-acid chain: Adenine phosphoribosyltransferase (171 aa).

This sequence belongs to the purine/pyrimidine phosphoribosyltransferase family. As to quaternary structure, homodimer.

Its subcellular location is the cytoplasm. The enzyme catalyses AMP + diphosphate = 5-phospho-alpha-D-ribose 1-diphosphate + adenine. Its pathway is purine metabolism; AMP biosynthesis via salvage pathway; AMP from adenine: step 1/1. In terms of biological role, catalyzes a salvage reaction resulting in the formation of AMP, that is energically less costly than de novo synthesis. The protein is Adenine phosphoribosyltransferase of Solidesulfovibrio magneticus (strain ATCC 700980 / DSM 13731 / RS-1) (Desulfovibrio magneticus).